A 172-amino-acid polypeptide reads, in one-letter code: Large ribosomal subunit protein uL10 (172 aa).

This sequence belongs to the universal ribosomal protein uL10 family. Part of the ribosomal stalk of the 50S ribosomal subunit. The N-terminus interacts with L11 and the large rRNA to form the base of the stalk. The C-terminus forms an elongated spine to which L12 dimers bind in a sequential fashion forming a multimeric L10(L12)X complex.

Functionally, forms part of the ribosomal stalk, playing a central role in the interaction of the ribosome with GTP-bound translation factors. The polypeptide is Large ribosomal subunit protein uL10 (Nitrobacter hamburgensis (strain DSM 10229 / NCIMB 13809 / X14)).